The chain runs to 399 residues: Carbamoyl phosphate synthase small chain (399 aa).

Positions 1–209 are CPSase; that stretch reads MEKFKLLKLG…SAINKKLHTS (209 aa). Residues Ser-55, Gly-261, and Gly-263 each coordinate L-glutamine. The 187-residue stretch at 213–399 folds into the Glutamine amidotransferase type-1 domain; it reads RIIVLDLGVK…VYIIYKSKSS (187 aa). Catalysis depends on Cys-289, which acts as the Nucleophile. L-glutamine is bound by residues Leu-290, Gln-293, Asn-329, Gly-331, and Phe-332. Active-site residues include His-372 and Glu-374.

The protein belongs to the CarA family. As to quaternary structure, composed of two chains; the small (or glutamine) chain promotes the hydrolysis of glutamine to ammonia, which is used by the large (or ammonia) chain to synthesize carbamoyl phosphate. Tetramer of heterodimers (alpha,beta)4.

The protein localises to the plastid. It is found in the chloroplast. It catalyses the reaction hydrogencarbonate + L-glutamine + 2 ATP + H2O = carbamoyl phosphate + L-glutamate + 2 ADP + phosphate + 2 H(+). The enzyme catalyses L-glutamine + H2O = L-glutamate + NH4(+). Its pathway is amino-acid biosynthesis; L-arginine biosynthesis; carbamoyl phosphate from bicarbonate: step 1/1. It functions in the pathway pyrimidine metabolism; UMP biosynthesis via de novo pathway; (S)-dihydroorotate from bicarbonate: step 1/3. In terms of biological role, small subunit of the glutamine-dependent carbamoyl phosphate synthetase (CPSase). CPSase catalyzes the formation of carbamoyl phosphate from the ammonia moiety of glutamine, carbonate, and phosphate donated by ATP, constituting the first step of 2 biosynthetic pathways, one leading to arginine and/or urea and the other to pyrimidine nucleotides. The small subunit (glutamine amidotransferase) binds and cleaves glutamine to supply the large subunit with the substrate ammonia. The sequence is that of Carbamoyl phosphate synthase small chain from Cyanidium caldarium (Red alga).